The chain runs to 566 residues: Sulfite reductase [NADPH] hemoprotein beta-component (566 aa).

Residues C430, C436, C475, and C479 each contribute to the [4Fe-4S] cluster site. Position 479 (C479) interacts with siroheme.

This sequence belongs to the nitrite and sulfite reductase 4Fe-4S domain family. As to quaternary structure, alpha(8)-beta(8). The alpha component is a flavoprotein, the beta component is a hemoprotein. Siroheme serves as cofactor. Requires [4Fe-4S] cluster as cofactor.

The catalysed reaction is hydrogen sulfide + 3 NADP(+) + 3 H2O = sulfite + 3 NADPH + 4 H(+). It participates in sulfur metabolism; hydrogen sulfide biosynthesis; hydrogen sulfide from sulfite (NADPH route): step 1/1. In terms of biological role, component of the sulfite reductase complex that catalyzes the 6-electron reduction of sulfite to sulfide. This is one of several activities required for the biosynthesis of L-cysteine from sulfate. The sequence is that of Sulfite reductase [NADPH] hemoprotein beta-component from Baumannia cicadellinicola subsp. Homalodisca coagulata.